Reading from the N-terminus, the 350-residue chain is Streptomycin biosynthesis operon possible regulatory protein (350 aa).

Residues 1-10 (MEHISGNSPE) show a composition bias toward polar residues. Disordered stretches follow at residues 1-20 (MEHI…AAVT), 168-189 (AGVP…LDPT), and 211-258 (AAQA…SRAD). Basic and acidic residues-rich tracts occupy residues 177–189 (IGRD…LDPT) and 223–242 (DVRK…DRQQ).

The protein is Streptomycin biosynthesis operon possible regulatory protein (strR) of Streptomyces griseus.